Reading from the N-terminus, the 200-residue chain is DNA-directed RNA polymerase subunit 7-like protein (200 aa).

It belongs to the eukaryotic RPB7/RPC8 RNA polymerase subunit family.

Its subcellular location is the nucleus. In Arabidopsis thaliana (Mouse-ear cress), this protein is DNA-directed RNA polymerase subunit 7-like protein (NRPB7L).